Here is a 74-residue protein sequence, read N- to C-terminus: Conotoxin Vt11.7 (74 aa).

The N-terminal stretch at Met1 to Ala26 is a signal peptide. Intrachain disulfides connect Cys28/Cys42, Cys35/Cys47, Cys41/Cys51, and Cys46/Cys55. Positions Ala62 to Arg74 are excised as a propeptide.

Belongs to the conotoxin I2 superfamily. As to expression, expressed by the venom duct.

It is found in the secreted. This is Conotoxin Vt11.7 from Conus planorbis (Planorbis cone).